The chain runs to 282 residues: Phosphate import ATP-binding protein PstB (282 aa).

Residues 1-10 (MNMAESHLDP) show a composition bias toward basic and acidic residues. The tract at residues 1-24 (MNMAESHLDPSKLATGPAGAGAAT) is disordered. The segment covering 14–24 (ATGPAGAGAAT) has biased composition (low complexity). The region spanning 36-277 (IEVKNLNFFY…PARKETEDYI (242 aa)) is the ABC transporter domain. 68-75 (GPSGCGKS) serves as a coordination point for ATP.

It belongs to the ABC transporter superfamily. Phosphate importer (TC 3.A.1.7) family. As to quaternary structure, the complex is composed of two ATP-binding proteins (PstB), two transmembrane proteins (PstC and PstA) and a solute-binding protein (PstS).

It localises to the cell inner membrane. The enzyme catalyses phosphate(out) + ATP + H2O = ADP + 2 phosphate(in) + H(+). Part of the ABC transporter complex PstSACB involved in phosphate import. Responsible for energy coupling to the transport system. This Burkholderia thailandensis (strain ATCC 700388 / DSM 13276 / CCUG 48851 / CIP 106301 / E264) protein is Phosphate import ATP-binding protein PstB.